The sequence spans 174 residues: uncharacterized protein (174 aa).

The protein to E.coli HemX C-terminal region.

This is an uncharacterized protein from Haemophilus influenzae (strain ATCC 51907 / DSM 11121 / KW20 / Rd).